The sequence spans 416 residues: CinA-like protein (416 aa).

It belongs to the CinA family.

The sequence is that of CinA-like protein from Synechocystis sp. (strain ATCC 27184 / PCC 6803 / Kazusa).